A 102-amino-acid polypeptide reads, in one-letter code: Putative septation protein SpoVG 1 (102 aa).

Belongs to the SpoVG family.

Functionally, could be involved in septation. The polypeptide is Putative septation protein SpoVG 1 (Listeria monocytogenes serotype 4b (strain F2365)).